The primary structure comprises 311 residues: Serine/threonine-protein phosphatase 4 catalytic subunit A (311 aa).

Positions 58, 60, 86, and 118 each coordinate Mn(2+). Catalysis depends on H119, which acts as the Proton donor. Residues H168 and H242 each contribute to the Mn(2+) site. L311 is modified (leucine methyl ester).

It belongs to the PPP phosphatase family. PP-4 (PP-X) subfamily. As to quaternary structure, serine/threonine-protein phosphatase 4 (PP4) occurs in different assemblies of the catalytic and one or more regulatory subunits. Requires Mn(2+) as cofactor.

It is found in the cytoplasm. It localises to the cytoskeleton. Its subcellular location is the microtubule organizing center. The protein resides in the centrosome. The enzyme catalyses O-phospho-L-seryl-[protein] + H2O = L-seryl-[protein] + phosphate. It carries out the reaction O-phospho-L-threonyl-[protein] + H2O = L-threonyl-[protein] + phosphate. Its function is as follows. Protein phosphatase that regulates many processes such as microtubule organization at centrosomes. This Danio rerio (Zebrafish) protein is Serine/threonine-protein phosphatase 4 catalytic subunit A (ppp4ca).